The following is a 1007-amino-acid chain: Mediator of RNA polymerase II transcription subunit 5 (1007 aa).

It belongs to the Mediator complex subunit 5 family. Component of the Mediator complex.

It localises to the nucleus. In terms of biological role, component of the Mediator complex, a coactivator involved in the regulated transcription of nearly all RNA polymerase II-dependent genes. Mediator functions as a bridge to convey information from gene-specific regulatory proteins to the basal RNA polymerase II transcription machinery. Mediator is recruited to promoters by direct interactions with regulatory proteins and serves as a scaffold for the assembly of a functional preinitiation complex with RNA polymerase II and the general transcription factors. The sequence is that of Mediator of RNA polymerase II transcription subunit 5 (nut1) from Aspergillus fumigatus (strain ATCC MYA-4609 / CBS 101355 / FGSC A1100 / Af293) (Neosartorya fumigata).